A 150-amino-acid polypeptide reads, in one-letter code: Large ribosomal subunit protein uL15 (150 aa).

Residues 18–43 (IVGRGSSSGWGKTSGKGHKGQQARSG) form a disordered region.

It belongs to the universal ribosomal protein uL15 family. Part of the 50S ribosomal subunit.

Its function is as follows. Binds to the 23S rRNA. The protein is Large ribosomal subunit protein uL15 of Treponema denticola (strain ATCC 35405 / DSM 14222 / CIP 103919 / JCM 8153 / KCTC 15104).